The chain runs to 151 residues: Glutamate mutase sigma subunit 1 (151 aa).

Positions 7–140 (PRTVILGVIG…EMLREDLQLT (134 aa)) constitute a B12-binding domain. Adenosylcob(III)alamin is bound by residues 17-21 (SDAHV), His20, 65-67 (SSL), and 96-100 (NLAVG).

Belongs to the methylaspartate mutase GlmS subunit family. Heterotetramer composed of 2 epsilon subunits (GlmE) and 2 sigma subunits (GlmS). GlmE exists as a homodimer and GlmS as a monomer. It depends on adenosylcob(III)alamin as a cofactor.

The enzyme catalyses (2S,3S)-3-methyl-L-aspartate = L-glutamate. It participates in amino-acid degradation; L-glutamate degradation via mesaconate pathway; acetate and pyruvate from L-glutamate: step 1/4. Functionally, catalyzes the carbon skeleton rearrangement of L-glutamate to L-threo-3-methylaspartate ((2S,3S)-3-methylaspartate). The polypeptide is Glutamate mutase sigma subunit 1 (Haloarcula marismortui (strain ATCC 43049 / DSM 3752 / JCM 8966 / VKM B-1809) (Halobacterium marismortui)).